A 483-amino-acid polypeptide reads, in one-letter code: Replication factor C large subunit (483 aa).

An ATP-binding site is contributed by 43 to 50; the sequence is GKPGIGKT. Positions 417 to 442 are enriched in basic and acidic residues; it reads ELKKKKKEEDAKGKKARGSKKEKEPI. Residues 417–483 form a disordered region; the sequence is ELKKKKKEED…KSSQSTLFSF (67 aa). Residues 448 to 457 show a composition bias toward polar residues; it reads SIDSFSSQEP.

It belongs to the activator 1 small subunits family. RfcL subfamily. Heteromultimer composed of small subunits (RfcS) and large subunits (RfcL).

Functionally, part of the RFC clamp loader complex which loads the PCNA sliding clamp onto DNA. The sequence is that of Replication factor C large subunit from Methanospirillum hungatei JF-1 (strain ATCC 27890 / DSM 864 / NBRC 100397 / JF-1).